A 717-amino-acid chain; its full sequence is Amino-acid acetyltransferase, mitochondrial (717 aa).

A mitochondrion-targeting transit peptide spans 1-23; the sequence is MFIWTKAPARGLGKASKILPKRD. The tract at residues 35 to 70 is disordered; it reads KQFHTATTSVRRSSSSAKERQRAERQQLTRLLKESP. Residues 39 to 50 are compositionally biased toward low complexity; that stretch reads TATTSVRRSSSS. Basic and acidic residues predominate over residues 51–70; it reads AKERQRAERQQLTRLLKESP. In terms of domain architecture, N-acetyltransferase spans 518–691; the sequence is NPSIELADDP…GDVDDAKKRD (174 aa).

Belongs to the acetyltransferase family.

The protein resides in the mitochondrion. The catalysed reaction is L-glutamate + acetyl-CoA = N-acetyl-L-glutamate + CoA + H(+). It participates in amino-acid biosynthesis; L-arginine biosynthesis; N(2)-acetyl-L-ornithine from L-glutamate: step 1/4. In terms of biological role, N-acetylglutamate synthase involved in arginine biosynthesis. This Pyrenophora tritici-repentis (strain Pt-1C-BFP) (Wheat tan spot fungus) protein is Amino-acid acetyltransferase, mitochondrial (arg2).